A 453-amino-acid chain; its full sequence is Phosphomannomutase (453 aa).

Ser96 acts as the Phosphoserine intermediate in catalysis. Residues Ser96, Asp243, Asp245, and Asp247 each contribute to the Mg(2+) site.

This sequence belongs to the phosphohexose mutase family. Requires Mg(2+) as cofactor.

It carries out the reaction alpha-D-mannose 1-phosphate = D-mannose 6-phosphate. It participates in nucleotide-sugar biosynthesis; GDP-alpha-D-mannose biosynthesis; alpha-D-mannose 1-phosphate from D-fructose 6-phosphate: step 2/2. The protein operates within bacterial outer membrane biogenesis; LPS O-antigen biosynthesis. Functionally, involved in GDP-mannose biosynthesis which serves as the activated sugar nucleotide precursor for mannose residues in cell surface polysaccharides. This enzyme participates in synthesis of the LPS O7 antigen. The chain is Phosphomannomutase (manB) from Escherichia coli.